Here is a 617-residue protein sequence, read N- to C-terminus: Electron transfer flavoprotein-ubiquinone oxidoreductase, mitochondrial (617 aa).

Residues 1 to 33 (MLVPLAKLSCPAYQCFHALKIKKNYLPLCATRW) constitute a mitochondrion transit peptide. 71 to 85 (VVIVGAGPAGLSAAV) contacts FAD. Residue lysine 96 is modified to N6-acetyllysine. The stretch at 109-130 (IGAHTLSGACLDPGAFKELFPD) is an intramembrane region. N6-acetyllysine is present on residues lysine 132 and lysine 223. Residues glycine 305 and glycine 306 each contribute to the a ubiquinone site. Lysine 357 carries the post-translational modification N6-acetyllysine. Residues 428–447 (MGLHVTEYEDNLKNSWVWKE) lie within the membrane without spanning it. Residue serine 551 is modified to Phosphoserine. Cysteine 561, cysteine 586, cysteine 589, and cysteine 592 together coordinate [4Fe-4S] cluster. Residues 577-606 (FRLQINAQNCVHCKTCDIKDPSQNINWVVP) form the 4Fe-4S ferredoxin-type domain.

The protein belongs to the ETF-QO/FixC family. In terms of assembly, monomer. The cofactor is [4Fe-4S] cluster. FAD serves as cofactor.

The protein localises to the mitochondrion inner membrane. The catalysed reaction is a ubiquinone + reduced [electron-transfer flavoprotein] = a ubiquinol + oxidized [electron-transfer flavoprotein] + H(+). Functionally, accepts electrons from ETF and reduces ubiquinone. The chain is Electron transfer flavoprotein-ubiquinone oxidoreductase, mitochondrial (ETFDH) from Pongo abelii (Sumatran orangutan).